Consider the following 144-residue polypeptide: Large ribosomal subunit protein uL16 (144 aa).

The protein belongs to the universal ribosomal protein uL16 family. As to quaternary structure, part of the 50S ribosomal subunit.

Functionally, binds 23S rRNA and is also seen to make contacts with the A and possibly P site tRNAs. This chain is Large ribosomal subunit protein uL16, found in Bacillus pumilus (strain SAFR-032).